The chain runs to 369 residues: Putative 2-aminoethylphosphonate import ATP-binding protein PhnT (369 aa).

The region spanning 19-250 (IVLDSLRVAY…PPNRFAAEFL (232 aa)) is the ABC transporter domain. 51–58 (GPSGSGKT) contributes to the ATP binding site.

The protein belongs to the ABC transporter superfamily. 2-aminoethylphosphonate importer (TC 3.A.1.11.5) family.

The protein localises to the cell inner membrane. In terms of biological role, probably part of the PhnSTUV complex (TC 3.A.1.11.5) involved in 2-aminoethylphosphonate import. Probably responsible for energy coupling to the transport system. This is Putative 2-aminoethylphosphonate import ATP-binding protein PhnT (phnT) from Salmonella paratyphi A (strain ATCC 9150 / SARB42).